Consider the following 313-residue polypeptide: MNSSTFEVLWGVNNIYSVVEVNTNTVYEGVIKGKFLNTREKEYSPLVPGDFVCGDIYDEHKVYIKERMERRNVFWRYNKKVALRQVIVSNIDNILIVSSATLPEFKNSFIDRTLIVAEEQGITPIILVNKVDEGINLRVDSFIKIYEYLGYRVIKTSVVTLQGIDEVKKIIKNSRTSFIGQSGVGKSSLINVIDLNASQAINEISYKYARGRHTTVYAVAFHSDNKILIDTPGIKEFGIEGLGYLELKYYFKEFKYFNDLCRFNSCLHINEPNCFVISQIGFKIAEARYNSYLKIFSELKRYKSYAREIFGKN.

Residues 80 to 237 enclose the CP-type G domain; the sequence is KVALRQVIVS…LIDTPGIKEF (158 aa). GTP-binding positions include 129–132 and 180–188; these read NKVD and GQSGVGKSS. Zn(2+) contacts are provided by Cys261, Cys266, His268, and Cys274.

The protein belongs to the TRAFAC class YlqF/YawG GTPase family. RsgA subfamily. Monomer. Associates with 30S ribosomal subunit, binds 16S rRNA. Zn(2+) serves as cofactor.

It is found in the cytoplasm. Functionally, one of several proteins that assist in the late maturation steps of the functional core of the 30S ribosomal subunit. Helps release RbfA from mature subunits. May play a role in the assembly of ribosomal proteins into the subunit. Circularly permuted GTPase that catalyzes slow GTP hydrolysis, GTPase activity is stimulated by the 30S ribosomal subunit. The chain is Small ribosomal subunit biogenesis GTPase RsgA from Borrelia recurrentis (strain A1).